The primary structure comprises 125 residues: Apolipoprotein C-IV (125 aa).

Positions 1-27 (MSLLRHSLQALPALCLCVLVLACIGAC) are cleaved as a signal peptide.

Belongs to the apolipoprotein C4 family.

It localises to the secreted. In terms of biological role, may participate in lipoprotein metabolism. The polypeptide is Apolipoprotein C-IV (APOC4) (Ateles geoffroyi (Black-handed spider monkey)).